The primary structure comprises 40 residues: Protamine-2 (40 aa).

Residues 1-40 (MPPRRKRVSSAPRRRRRTYRRTTAHKHQERPVHRRRRRRH) are disordered.

As to expression, testis.

Its subcellular location is the nucleus. The protein resides in the chromosome. Its function is as follows. Protamines substitute for histones in the chromatin of sperm during the haploid phase of spermatogenesis. They compact sperm DNA into a highly condensed, stable and inactive complex. The chain is Protamine-2 (PBP2) from Bufo japonicus (Japanese common toad).